A 353-amino-acid chain; its full sequence is Peroxidase C1A (353 aa).

The first 30 residues, 1-30, serve as a signal peptide directing secretion; the sequence is MHFSSSSTLFTCITLIPLVCLILHASLSDA. The residue at position 31 (Gln-31) is a Pyrrolidone carboxylic acid. 4 cysteine pairs are disulfide-bonded: Cys-41–Cys-121, Cys-74–Cys-79, Cys-127–Cys-331, and Cys-207–Cys-239. Asn-43 is a glycosylation site (N-linked (GlcNAc...) asparagine). His-72 (proton acceptor) is an active-site residue. 5 residues coordinate Ca(2+): Asp-73, Val-76, Gly-78, Asp-80, and Ser-82. N-linked (GlcNAc...) asparagine glycosylation occurs at Asn-87. Glu-94 provides a ligand contact to Ca(2+). Residue Pro-169 participates in substrate binding. N-linked (GlcNAc...) asparagine glycosylation is present at Asn-188. His-200 contributes to the heme b binding site. Residue Thr-201 participates in Ca(2+) binding. N-linked (GlcNAc...) asparagine glycans are attached at residues Asn-216, Asn-228, and Asn-244. The Ca(2+) site is built by Asp-252, Thr-255, and Asp-260. 2 N-linked (GlcNAc...) asparagine glycosylation sites follow: Asn-285 and Asn-298. Positions 339 to 353 are excised as a propeptide; sequence LLHDMVEVVDFVSSM.

It belongs to the peroxidase family. Classical plant (class III) peroxidase subfamily. As to quaternary structure, monomer. Ca(2+) is required as a cofactor. Heme b serves as cofactor.

The protein localises to the secreted. The protein resides in the vacuole. It catalyses the reaction 2 a phenolic donor + H2O2 = 2 a phenolic radical donor + 2 H2O. Functionally, removal of H(2)O(2), oxidation of toxic reductants, biosynthesis and degradation of lignin, suberization, auxin catabolism, response to environmental stresses such as wounding, pathogen attack and oxidative stress. These functions might be dependent on each isozyme/isoform in each plant tissue. The sequence is that of Peroxidase C1A (PRXC1A) from Armoracia rusticana (Horseradish).